Consider the following 296-residue polypeptide: MEINGVEIEDTFAEAFEAKMARVLITAASHKWAMIAVKEATGFGTSVIMCPAEAGIDCGYVPPEETPDGRPGVTIMIGHNDEDELKEQLLDRIGQCVMTAPTASAFDAMPEAEKEDEDRVGYKLSFFGDGYQEEDELDGRKVWKIPVVEGEFIVEDSFGITTGVAGGNFYIMAESQPAGLQAAEAAVDAIKGVEGAYAPFPGGIVASASKVGSKQYDFLPASTNDAYCPTVEDNELPEGVKCVYEIVINGLNEEAVKEAMRVGIEAACQQPGVVKISAGNFGGKLGQYEIHLHDLF.

It belongs to the FTR family. In terms of assembly, homotetramer composed of two dimers. Dimerization is sufficient for enzyme activity, but tetramerization is required for high thermostability.

It localises to the cytoplasm. It catalyses the reaction N-formylmethanofuran + 5,6,7,8-tetrahydromethanopterin + H(+) = N(5)-formyl-5,6,7,8-tetrahydromethanopterin + methanofuran. The protein operates within one-carbon metabolism; methanogenesis from CO(2); 5,10-methenyl-5,6,7,8-tetrahydromethanopterin from CO(2): step 2/3. Its activity is regulated as follows. Requires high salt concentrations for activity and thermostability; 1.5-1.8 M KH(2)PO(4) stimulates activity while stabilizing the enzyme. In terms of biological role, catalyzes the reversible transfer of a formyl group from formylmethanofuran (formyl-MFR) to tetrahydromethanopterin (H(4)MPT) to produce 5-formyl tetrahydromethanopterin (5-formyl-H(4)MPT) and methanofuran (MFR). Acts via a ternary-complex mechanism. Uses N-furfurylformamide much less efficiently, does not use N-methylformamide or formamide. Protein overexpressed in E.coli has very similar properties to enzyme purified from M.kandleri. The sequence is that of Formylmethanofuran--tetrahydromethanopterin formyltransferase from Methanopyrus kandleri (strain AV19 / DSM 6324 / JCM 9639 / NBRC 100938).